Here is a 194-residue protein sequence, read N- to C-terminus: Ribosome maturation factor RimP (194 aa).

Belongs to the RimP family.

Its subcellular location is the cytoplasm. In terms of biological role, required for maturation of 30S ribosomal subunits. This is Ribosome maturation factor RimP from Jannaschia sp. (strain CCS1).